Reading from the N-terminus, the 104-residue chain is MSEFKNVTLIKKANVYYDGKVTSRTVIFADGTKKTLGIMMPGEYTFDTAAAEVMEMLGGSMEVLLPGAETWQSFHEGQSFEVPANSQFSLKIKEVADYCCSYLK.

It belongs to the nucleoside phosphorylase PpnP family.

The enzyme catalyses a purine D-ribonucleoside + phosphate = a purine nucleobase + alpha-D-ribose 1-phosphate. It carries out the reaction adenosine + phosphate = alpha-D-ribose 1-phosphate + adenine. The catalysed reaction is cytidine + phosphate = cytosine + alpha-D-ribose 1-phosphate. It catalyses the reaction guanosine + phosphate = alpha-D-ribose 1-phosphate + guanine. The enzyme catalyses inosine + phosphate = alpha-D-ribose 1-phosphate + hypoxanthine. It carries out the reaction thymidine + phosphate = 2-deoxy-alpha-D-ribose 1-phosphate + thymine. The catalysed reaction is uridine + phosphate = alpha-D-ribose 1-phosphate + uracil. It catalyses the reaction xanthosine + phosphate = alpha-D-ribose 1-phosphate + xanthine. In terms of biological role, catalyzes the phosphorolysis of diverse nucleosides, yielding D-ribose 1-phosphate and the respective free bases. Can use uridine, adenosine, guanosine, cytidine, thymidine, inosine and xanthosine as substrates. Also catalyzes the reverse reactions. The sequence is that of Pyrimidine/purine nucleoside phosphorylase from Syntrophotalea carbinolica (strain DSM 2380 / NBRC 103641 / GraBd1) (Pelobacter carbinolicus).